The following is a 214-amino-acid chain: MRNQNQPVAIEGYPFIGLFAFITLVFALLGWSVCTLLFLGLTLFAAYFFRNPDRYSDAEDAAILAPADGKVVYVGPALEERYFKSEVTKISIFMSVFNVHVNRVPMAGKVVDMFYNKGQFLNAAMDKASLHNEQSGMLLEHTSGRRMLVVQIAGLIARRIVTYPVVGDILQRGARYGLIRFGSRVDIYLEDDVDIQVTVGERVCCGETVLGFLK.

S183 acts as the Schiff-base intermediate with substrate; via pyruvic acid in catalysis. Position 183 is a pyruvic acid (Ser); by autocatalysis (S183).

It belongs to the phosphatidylserine decarboxylase family. PSD-A subfamily. In terms of assembly, heterodimer of a large membrane-associated beta subunit and a small pyruvoyl-containing alpha subunit. The cofactor is pyruvate. Is synthesized initially as an inactive proenzyme. Formation of the active enzyme involves a self-maturation process in which the active site pyruvoyl group is generated from an internal serine residue via an autocatalytic post-translational modification. Two non-identical subunits are generated from the proenzyme in this reaction, and the pyruvate is formed at the N-terminus of the alpha chain, which is derived from the carboxyl end of the proenzyme. The post-translation cleavage follows an unusual pathway, termed non-hydrolytic serinolysis, in which the side chain hydroxyl group of the serine supplies its oxygen atom to form the C-terminus of the beta chain, while the remainder of the serine residue undergoes an oxidative deamination to produce ammonia and the pyruvoyl prosthetic group on the alpha chain.

The protein localises to the cell membrane. It catalyses the reaction a 1,2-diacyl-sn-glycero-3-phospho-L-serine + H(+) = a 1,2-diacyl-sn-glycero-3-phosphoethanolamine + CO2. The protein operates within phospholipid metabolism; phosphatidylethanolamine biosynthesis; phosphatidylethanolamine from CDP-diacylglycerol: step 2/2. Functionally, catalyzes the formation of phosphatidylethanolamine (PtdEtn) from phosphatidylserine (PtdSer). This is Phosphatidylserine decarboxylase proenzyme from Syntrophotalea carbinolica (strain DSM 2380 / NBRC 103641 / GraBd1) (Pelobacter carbinolicus).